Consider the following 148-residue polypeptide: UPF0756 membrane protein NMC1845 (148 aa).

Transmembrane regions (helical) follow at residues 13–35 (LILLGVVSNNNSITISATILLLM), 50–70 (HGLNLGIILLTIGVLSPLVSG), 80–100 (FLNFKMISAVFIGIFVAWLAG), and 121–141 (VIGVAFMGGIPVGPLIAAGIL).

This sequence belongs to the UPF0756 family.

The protein localises to the cell membrane. The chain is UPF0756 membrane protein NMC1845 from Neisseria meningitidis serogroup C / serotype 2a (strain ATCC 700532 / DSM 15464 / FAM18).